The primary structure comprises 130 residues: Small ribosomal subunit protein uS8 (130 aa).

Belongs to the universal ribosomal protein uS8 family. Part of the 30S ribosomal subunit. Contacts proteins S5 and S12.

Its function is as follows. One of the primary rRNA binding proteins, it binds directly to 16S rRNA central domain where it helps coordinate assembly of the platform of the 30S subunit. In Buchnera aphidicola subsp. Baizongia pistaciae (strain Bp), this protein is Small ribosomal subunit protein uS8.